Here is a 302-residue protein sequence, read N- to C-terminus: uncharacterized protein (302 aa).

7 helical membrane-spanning segments follow: residues 25-45 (SFIF…LQIF), 58-78 (FSYL…VIAL), 104-124 (IQVG…WMFL), 158-178 (YGLL…ATVL), 182-202 (FAWA…QYVP), 215-235 (ALSI…GYLL), and 247-267 (MMYI…MFYL). In terms of domain architecture, PQ-loop spans 175 to 245 (ATVLSSNFAW…SRLPGTNWTT (71 aa)).

Its subcellular location is the membrane. This is an uncharacterized protein from Schizosaccharomyces pombe (strain 972 / ATCC 24843) (Fission yeast).